Here is an 89-residue protein sequence, read N- to C-terminus: Dynein light chain 1, cytoplasmic (89 aa).

This sequence belongs to the dynein light chain family. In terms of assembly, interacts with mett-10; the interaction is direct, and is required for the nuclear localization of mett-10. Component of a dynein-regulating complex composed of at least bicd-1, dlc-1 and egal-1. Interacts with egal-1 and unc-83. Interacts with fbf-2. In terms of tissue distribution, broadly expressed in tissues including the intestine, body wall muscles, germs cells, oocytes, the rectal valve and cells in the head.

The protein resides in the cytoplasm. The protein localises to the cytoskeleton. It is found in the nucleus envelope. Its subcellular location is the cytoplasmic granule. Its function is as follows. Acts as a non-catalytic accessory component of a dynein complex. Part of a complex with bicd-1 and egal-1, which is recruited to the nuclear envelope by unc-83, where in turn, it recruits dynein to the nuclear surface and regulates nuclear migrations in hypodermal precursor cells. Probably within a dynein motor complex, plays a role in the cell fate specification of the germline and oogenesis. In particular, it inhibits germ cell proliferation. Regulates the function and localization of the RNA-binding protein fbf-2 in the germline. Plays a role in mitotic and meiotic processes. Involved in the pairing of homologous chromosomes. Independently of its dynein-mediated functions, plays a role in germ cell apoptosis. The polypeptide is Dynein light chain 1, cytoplasmic (Caenorhabditis elegans).